Consider the following 399-residue polypeptide: Interferon regulatory factor 9 (399 aa).

A DNA-binding region (IRF tryptophan pentad repeat) is located at residues 9 to 116 (TRKLRSWIVE…EPYKVYRILP (108 aa)). A disordered region spans residues 118-189 (GTLPNQPRNQ…CNSELEEGAG (72 aa)). Residues 120-129 (LPNQPRNQKS) are compositionally biased toward polar residues. Serine 139 is modified (phosphoserine). The segment covering 148–157 (NGRTNGVVNH) has biased composition (polar residues). Positions 171–189 (SNRSDSNSNCNSELEEGAG) are enriched in low complexity. At serine 393 the chain carries Phosphoserine.

Belongs to the IRF family. In terms of assembly, interacts with STAT2 in the cytoplasm. Forms the interferon-stimulated gene factor 3 complex (ISGF3) with the heterodimer STAT1:STAT2; upon stimulation.

It localises to the nucleus. Its function is as follows. Transcription factor that plays an essential role in anti-viral immunity. It mediates signaling by type I IFNs (IFN-alpha and IFN-beta). Following type I IFN binding to cell surface receptors, Jak kinases (TYK2 and JAK1) are activated, leading to tyrosine phosphorylation of STAT1 and STAT2. IRF9/ISGF3G associates with the phosphorylated STAT1:STAT2 dimer to form a complex termed ISGF3 transcription factor, that enters the nucleus. ISGF3 binds to the IFN stimulated response element (ISRE) to activate the transcription of interferon stimulated genes, which drive the cell in an antiviral state. This chain is Interferon regulatory factor 9 (Irf9), found in Mus musculus (Mouse).